A 353-amino-acid polypeptide reads, in one-letter code: Melanin-concentrating hormone receptor 1 (353 aa).

The disordered stretch occupies residues 1–28 (MDLEASLLPTGPNASNTSDGPDNLTSAG). At 1–45 (MDLEASLLPTGPNASNTSDGPDNLTSAGPPPRTGSISYVNIIMPS) the chain is on the extracellular side. Polar residues predominate over residues 12–26 (PNASNTSDGPDNLTS). N-linked (GlcNAc...) asparagine glycans are attached at residues N13, N16, and N23. Residues 46–66 (VFGTICLLGIIGNSMVIFAVV) form a helical membrane-spanning segment. Topologically, residues 67–79 (KKSKLHWFSNVPD) are cytoplasmic. A helical membrane pass occupies residues 80 to 100 (IFIINLSVVDLLFLLGMPFMI). Over 101–116 (HQLMGNGVWHFGETMC) the chain is Extracellular. The cysteines at positions 116 and 194 are disulfide-linked. The chain crosses the membrane as a helical span at residues 117-139 (TLITAMDANSQFTSTYILTAMAI). Residues 140-161 (DRYLATVHPISSTRFRKPSVAT) lie on the Cytoplasmic side of the membrane. Residues 162–182 (LVICLLWALSIISITPVWLYA) traverse the membrane as a helical segment. The Extracellular portion of the chain corresponds to 183-204 (RLIPFPGGTVGCGIRLPNPDTD). The chain crosses the membrane as a helical span at residues 205 to 225 (LYWFTLYQFFLAFALPFVVIT). The Cytoplasmic segment spans residues 226–256 (AAYVRILQRMTSSVAPASQRSIRLRTKRVTR). A helical membrane pass occupies residues 257–277 (TAIAICLVFFVCWAPYYVLQL). Topologically, residues 278–294 (TQLSISRPTLTFVYLYN) are extracellular. Residues 295–315 (AAISLGYANSCLNPFVYIVLC) form a helical membrane-spanning segment. The Cytoplasmic segment spans residues 316-353 (ETFRKRLVLSVKPAAQGQLRAVSNAQTAEEERTESKGT).

It belongs to the G-protein coupled receptor 1 family. As to quaternary structure, interacts with NCDN.

Its subcellular location is the cell membrane. Its function is as follows. Receptor for melanin-concentrating hormone, coupled to both G proteins that inhibit adenylyl cyclase and G proteins that activate phosphoinositide hydrolysis. This Sus scrofa (Pig) protein is Melanin-concentrating hormone receptor 1.